An 83-amino-acid chain; its full sequence is Putative regulatory protein FMG_0656 (83 aa).

This sequence belongs to the RemA family.

This is Putative regulatory protein FMG_0656 from Finegoldia magna (strain ATCC 29328 / DSM 20472 / WAL 2508) (Peptostreptococcus magnus).